We begin with the raw amino-acid sequence, 199 residues long: MALLLFNDHYYGFLHKYKRHTGSYDNLFNLRCSKEDHYLNSLDAIWLMGCCEEFTDPALRAHALAIATESNIGLVNNNAVISDERLKCWLCKKPSHQQTEHLKLILLPNLVNGFQFATESYHICLKDHSGDDPTQYLSEFSFPTGLRAYYKPHQKMEHKHIVVTNGIPISKNFNEIALPDPSPSDDYVLVGAHECPILM.

The protein resides in the host cytoplasm. In Avena sativa (Oat), this protein is Protein p2.